The chain runs to 182 residues: Putative manganese efflux pump MntP (182 aa).

The next 6 membrane-spanning stretches (helical) occupy residues 6-26 (LIPL…VSLG), 37-57 (ILYI…IGMV), 72-92 (FAGA…SILE), 101-121 (IGIS…SVGL), 131-151 (IITI…GLLL), and 162-182 (YGEI…LFPI).

It belongs to the MntP (TC 9.B.29) family.

Its subcellular location is the cell membrane. Probably functions as a manganese efflux pump. The chain is Putative manganese efflux pump MntP from Bacillus mycoides (strain KBAB4) (Bacillus weihenstephanensis).